Reading from the N-terminus, the 340-residue chain is 4-hydroxy-3-methylbut-2-enyl diphosphate reductase (340 aa).

[4Fe-4S] cluster is bound at residue cysteine 13. (2E)-4-hydroxy-3-methylbut-2-enyl diphosphate-binding residues include histidine 42 and histidine 75. Positions 42 and 75 each coordinate dimethylallyl diphosphate. Isopentenyl diphosphate-binding residues include histidine 42 and histidine 75. Cysteine 97 contributes to the [4Fe-4S] cluster binding site. Residue histidine 125 participates in (2E)-4-hydroxy-3-methylbut-2-enyl diphosphate binding. Histidine 125 is a dimethylallyl diphosphate binding site. Histidine 125 lines the isopentenyl diphosphate pocket. Glutamate 127 (proton donor) is an active-site residue. Threonine 165 contributes to the (2E)-4-hydroxy-3-methylbut-2-enyl diphosphate binding site. Residue cysteine 195 participates in [4Fe-4S] cluster binding. (2E)-4-hydroxy-3-methylbut-2-enyl diphosphate is bound by residues serine 223, serine 224, asparagine 225, and serine 267. Dimethylallyl diphosphate contacts are provided by serine 223, serine 224, asparagine 225, and serine 267. Positions 223, 224, 225, and 267 each coordinate isopentenyl diphosphate. A disordered region spans residues 317 to 340; the sequence is NNLDNKTAASEEADSLSNDTEQEA. Polar residues predominate over residues 331-340; that stretch reads SLSNDTEQEA.

It belongs to the IspH family. [4Fe-4S] cluster is required as a cofactor.

The enzyme catalyses isopentenyl diphosphate + 2 oxidized [2Fe-2S]-[ferredoxin] + H2O = (2E)-4-hydroxy-3-methylbut-2-enyl diphosphate + 2 reduced [2Fe-2S]-[ferredoxin] + 2 H(+). It catalyses the reaction dimethylallyl diphosphate + 2 oxidized [2Fe-2S]-[ferredoxin] + H2O = (2E)-4-hydroxy-3-methylbut-2-enyl diphosphate + 2 reduced [2Fe-2S]-[ferredoxin] + 2 H(+). Its pathway is isoprenoid biosynthesis; dimethylallyl diphosphate biosynthesis; dimethylallyl diphosphate from (2E)-4-hydroxy-3-methylbutenyl diphosphate: step 1/1. It participates in isoprenoid biosynthesis; isopentenyl diphosphate biosynthesis via DXP pathway; isopentenyl diphosphate from 1-deoxy-D-xylulose 5-phosphate: step 6/6. Its function is as follows. Catalyzes the conversion of 1-hydroxy-2-methyl-2-(E)-butenyl 4-diphosphate (HMBPP) into a mixture of isopentenyl diphosphate (IPP) and dimethylallyl diphosphate (DMAPP). Acts in the terminal step of the DOXP/MEP pathway for isoprenoid precursor biosynthesis. The protein is 4-hydroxy-3-methylbut-2-enyl diphosphate reductase of Zymomonas mobilis subsp. mobilis (strain ATCC 31821 / ZM4 / CP4).